The primary structure comprises 158 residues: Snaclec mucetin subunit alpha (158 aa).

The first 23 residues, 1 to 23 (MGRFTFVSFGLLVVFLSLSGTGA), serve as a signal peptide directing secretion. 3 cysteine pairs are disulfide-bonded: C27–C38, C55–C152, and C127–C144. Residues 34–153 (YDRYCYQAFS…CGRENPFVCK (120 aa)) form the C-type lectin domain.

Belongs to the snaclec family. Dimer and tetramer of heterodimers of alpha and beta subunits ((alphabeta)(2) and (alphabeta)(4)); disulfide-linked. These two multimeric forms are found. The complex is glycosylated. In terms of tissue distribution, expressed by the venom gland.

The protein resides in the secreted. Its function is as follows. Potent platelet activator that acts via GPIb (GP1BA/GP1BB). After activation by the toxin, the receptor is redistributed on platelet surface thanks to cytoskeletal translocation. The indirect activation of integrin alpha-IIb/beta-3 (ITGA2B/ITGB3) also induced by the toxin is downstream the cytoskeletal translocation of GPIb. This chain is Snaclec mucetin subunit alpha, found in Protobothrops mucrosquamatus (Taiwan habu).